Consider the following 84-residue polypeptide: Large ribosomal subunit protein bL27 (84 aa).

The interval 1–21 is disordered; sequence MAHKKGGGSTKNGRDSNPQYL.

It belongs to the bacterial ribosomal protein bL27 family.

This is Large ribosomal subunit protein bL27 from Chloroherpeton thalassium (strain ATCC 35110 / GB-78).